A 114-amino-acid chain; its full sequence is Large ribosomal subunit protein bL19 (114 aa).

The protein belongs to the bacterial ribosomal protein bL19 family.

In terms of biological role, this protein is located at the 30S-50S ribosomal subunit interface and may play a role in the structure and function of the aminoacyl-tRNA binding site. The polypeptide is Large ribosomal subunit protein bL19 (Bacillus mycoides (strain KBAB4) (Bacillus weihenstephanensis)).